Consider the following 566-residue polypeptide: Putative pentatricopeptide repeat-containing protein At1g28020 (566 aa).

PPR repeat units follow at residues 136–171 (GDSV…GLLL), 172–206 (RPVP…DVEA), 207–242 (DNVT…GIKL), 243–273 (EWHT…TEQL), 279–309 (LKSA…YKSK), 314–348 (DNNG…PLEF), 349–385 (DHRI…RMNK), 468–504 (DYSV…NVDP), and 505–540 (DLIT…GIKL).

Belongs to the PPR family. P subfamily.

The polypeptide is Putative pentatricopeptide repeat-containing protein At1g28020 (Arabidopsis thaliana (Mouse-ear cress)).